The following is a 153-amino-acid chain: Ribonuclease H (153 aa).

In terms of domain architecture, RNase H type-1 spans 1–142 (MTDQIEIFTD…ADELARRGVD (142 aa)). The Mg(2+) site is built by aspartate 10, glutamate 48, aspartate 70, and aspartate 134.

Belongs to the RNase H family. As to quaternary structure, monomer. The cofactor is Mg(2+).

The protein resides in the cytoplasm. It carries out the reaction Endonucleolytic cleavage to 5'-phosphomonoester.. Its function is as follows. Endonuclease that specifically degrades the RNA of RNA-DNA hybrids. This is Ribonuclease H from Aromatoleum aromaticum (strain DSM 19018 / LMG 30748 / EbN1) (Azoarcus sp. (strain EbN1)).